The sequence spans 555 residues: Glutamine--tRNA ligase (555 aa).

Residues 35 to 45 (PEPNGYLHIGH) carry the 'HIGH' region motif. Residues 36 to 38 (EPN) and 42 to 48 (HIGHAKS) each bind ATP. L-glutamine-binding residues include Asp-68 and Tyr-213. Residues Thr-232 and 262–263 (RL) contribute to the ATP site. A 'KMSKS' region motif is present at residues 269–273 (ITSKR).

It belongs to the class-I aminoacyl-tRNA synthetase family. In terms of assembly, monomer.

The protein localises to the cytoplasm. The enzyme catalyses tRNA(Gln) + L-glutamine + ATP = L-glutaminyl-tRNA(Gln) + AMP + diphosphate. The protein is Glutamine--tRNA ligase of Ectopseudomonas mendocina (strain ymp) (Pseudomonas mendocina).